An 876-amino-acid polypeptide reads, in one-letter code: Leucine--tRNA ligase (876 aa).

The 'HIGH' region motif lies at 43–53 (PYPSGRIHMGH). The 'KMSKS' region signature appears at 632–636 (KMSKS). Lys635 serves as a coordination point for ATP.

This sequence belongs to the class-I aminoacyl-tRNA synthetase family.

The protein resides in the cytoplasm. The enzyme catalyses tRNA(Leu) + L-leucine + ATP = L-leucyl-tRNA(Leu) + AMP + diphosphate. In Sinorhizobium medicae (strain WSM419) (Ensifer medicae), this protein is Leucine--tRNA ligase.